The primary structure comprises 383 residues: Queuine tRNA-ribosyltransferase (383 aa).

Asp92 serves as the catalytic Proton acceptor. Substrate contacts are provided by residues 92–96 (DSGGF), Asp146, Gln190, and Gly217. The interval 248 to 254 (GVGKPED) is RNA binding. Asp267 acts as the Nucleophile in catalysis. The tract at residues 272–276 (TRNAR) is RNA binding; important for wobble base 34 recognition. Residues Cys310, Cys312, Cys315, and His341 each coordinate Zn(2+).

It belongs to the queuine tRNA-ribosyltransferase family. Homodimer. Within each dimer, one monomer is responsible for RNA recognition and catalysis, while the other monomer binds to the replacement base PreQ1. It depends on Zn(2+) as a cofactor.

It catalyses the reaction 7-aminomethyl-7-carbaguanine + guanosine(34) in tRNA = 7-aminomethyl-7-carbaguanosine(34) in tRNA + guanine. The protein operates within tRNA modification; tRNA-queuosine biosynthesis. Catalyzes the base-exchange of a guanine (G) residue with the queuine precursor 7-aminomethyl-7-deazaguanine (PreQ1) at position 34 (anticodon wobble position) in tRNAs with GU(N) anticodons (tRNA-Asp, -Asn, -His and -Tyr). Catalysis occurs through a double-displacement mechanism. The nucleophile active site attacks the C1' of nucleotide 34 to detach the guanine base from the RNA, forming a covalent enzyme-RNA intermediate. The proton acceptor active site deprotonates the incoming PreQ1, allowing a nucleophilic attack on the C1' of the ribose to form the product. After dissociation, two additional enzymatic reactions on the tRNA convert PreQ1 to queuine (Q), resulting in the hypermodified nucleoside queuosine (7-(((4,5-cis-dihydroxy-2-cyclopenten-1-yl)amino)methyl)-7-deazaguanosine). In Psychrobacter sp. (strain PRwf-1), this protein is Queuine tRNA-ribosyltransferase.